The following is a 299-amino-acid chain: Putative syntaxin-2 (299 aa).

The Cytoplasmic segment spans residues 1-270; that stretch reads MRDRLNEFQS…SAMRKKICVA (270 aa). The stretch at 112–146 forms a coiled coil; it reads EKRMRQNQLELLKDNLNKLINLFNETHQDYKSRVS. In terms of domain architecture, t-SNARE coiled-coil homology spans 193–255; sequence YEDVKKRHGE…KQGSANVKTA (63 aa). The chain crosses the membrane as a helical; Anchor for type IV membrane protein span at residues 271–291; it reads AILITILLILIIVAIILAVVL. The Extracellular segment spans residues 292-299; the sequence is SRGNNNNK.

The protein belongs to the syntaxin family.

It localises to the membrane. Its function is as follows. Potentially involved in docking of synaptic vesicles at presynaptic active zones. In Caenorhabditis elegans, this protein is Putative syntaxin-2 (syx-2).